The sequence spans 116 residues: Putative antiporter subunit mnhC2 (116 aa).

The next 3 helical transmembrane spans lie at 3–23 (LILLMVIGFLIFIGTYMILSV), 28–48 (IVIGISIYTHAGNLIIMSMGN), and 72–92 (AIVLTAIVIGFAMTAFLLVLV).

The protein belongs to the CPA3 antiporters (TC 2.A.63) subunit C family. May form a heterooligomeric complex that consists of seven subunits: mnhA2, mnhB2, mnhC2, mnhD2, mnhE2, mnhF2 and mnhG2.

It localises to the cell membrane. In Staphylococcus saprophyticus subsp. saprophyticus (strain ATCC 15305 / DSM 20229 / NCIMB 8711 / NCTC 7292 / S-41), this protein is Putative antiporter subunit mnhC2 (mnhC2).